The following is a 476-amino-acid chain: Glycogen synthase (476 aa).

An ADP-alpha-D-glucose-binding site is contributed by K15.

It belongs to the glycosyltransferase 1 family. Bacterial/plant glycogen synthase subfamily.

The catalysed reaction is [(1-&gt;4)-alpha-D-glucosyl](n) + ADP-alpha-D-glucose = [(1-&gt;4)-alpha-D-glucosyl](n+1) + ADP + H(+). Its pathway is glycan biosynthesis; glycogen biosynthesis. Its function is as follows. Synthesizes alpha-1,4-glucan chains using ADP-glucose. The chain is Glycogen synthase from Bacillus cereus (strain ATCC 14579 / DSM 31 / CCUG 7414 / JCM 2152 / NBRC 15305 / NCIMB 9373 / NCTC 2599 / NRRL B-3711).